Consider the following 160-residue polypeptide: Cytochrome b6-f complex subunit 4 (160 aa).

3 helical membrane-spanning segments follow: residues 36 to 56 (LLYTFPVVILGTITCCIGLAL), 95 to 115 (LLGVLSMASVPLGLIFVPFIE), and 127 to 147 (PIATTVFLVGTVVTIWLGIGA).

Belongs to the cytochrome b family. PetD subfamily. In terms of assembly, the 4 large subunits of the cytochrome b6-f complex are cytochrome b6, subunit IV (17 kDa polypeptide, petD), cytochrome f and the Rieske protein, while the 4 small subunits are petG, petL, petM and petN. The complex functions as a dimer.

It localises to the plastid. The protein localises to the chloroplast thylakoid membrane. Component of the cytochrome b6-f complex, which mediates electron transfer between photosystem II (PSII) and photosystem I (PSI), cyclic electron flow around PSI, and state transitions. The protein is Cytochrome b6-f complex subunit 4 of Cyanidioschyzon merolae (strain NIES-3377 / 10D) (Unicellular red alga).